The following is a 35-amino-acid chain: Photosystem II reaction center protein M (35 aa).

The chain crosses the membrane as a helical span at residues isoleucine 5–leucine 25.

It belongs to the PsbM family. As to quaternary structure, PSII is composed of 1 copy each of membrane proteins PsbA, PsbB, PsbC, PsbD, PsbE, PsbF, PsbH, PsbI, PsbJ, PsbK, PsbL, PsbM, PsbT, PsbX, PsbY, PsbZ, Psb30/Ycf12, at least 3 peripheral proteins of the oxygen-evolving complex and a large number of cofactors. It forms dimeric complexes.

Its subcellular location is the plastid. The protein resides in the chloroplast thylakoid membrane. Functionally, one of the components of the core complex of photosystem II (PSII). PSII is a light-driven water:plastoquinone oxidoreductase that uses light energy to abstract electrons from H(2)O, generating O(2) and a proton gradient subsequently used for ATP formation. It consists of a core antenna complex that captures photons, and an electron transfer chain that converts photonic excitation into a charge separation. This subunit is found at the monomer-monomer interface. In Chara vulgaris (Common stonewort), this protein is Photosystem II reaction center protein M.